The sequence spans 381 residues: L-lactate dehydrogenase (381 aa).

One can recognise an FMN hydroxy acid dehydrogenase domain in the interval 1–380; the sequence is MIISASTDYR…SADSLVRELG (380 aa). Y24 lines the substrate pocket. S106 and Q127 together coordinate FMN. Y129 provides a ligand contact to substrate. T155 contacts FMN. Residue R164 coordinates substrate. K251 provides a ligand contact to FMN. H275 (proton acceptor) is an active-site residue. R278 contributes to the substrate binding site. 306-330 contacts FMN; the sequence is DSGIRTGLDVVRMIALGADSVLLGR.

Belongs to the FMN-dependent alpha-hydroxy acid dehydrogenase family. As to quaternary structure, homotetramer. FMN serves as cofactor.

The protein resides in the cell inner membrane. The enzyme catalyses (S)-lactate + A = pyruvate + AH2. Its function is as follows. Catalyzes the conversion of L-lactate to pyruvate. Is coupled to the respiratory chain. This is L-lactate dehydrogenase from Pseudomonas paraeruginosa (strain DSM 24068 / PA7) (Pseudomonas aeruginosa (strain PA7)).